We begin with the raw amino-acid sequence, 644 residues long: NADH-ubiquinone oxidoreductase chain 5 (644 aa).

18 helical membrane-spanning segments follow: residues 4–23, 30–49, 78–100, 112–129, 133–155, 167–189, 199–221, 234–256, 271–293, 300–322, 327–349, 361–383, 398–420, 466–488, 517–539, 546–568, 594–616, and 623–642; these read FITL…RYIG, LNII…YINI, DLLS…IFAW, FYTY…LVLG, LILF…FWYN, LFIN…YIYK, LVSY…AASA, WAMA…IAGI, NILL…IAIN, IIAL…SSYN, HVLC…IHSL, GLLI…LMGL, SSIG…SSLL, SWMA…YLLQ, INIY…IIYL, LLYI…RFLF, GFLY…FNII, and FNHY…YLQF.

This sequence belongs to the complex I subunit 5 family.

It is found in the mitochondrion inner membrane. It carries out the reaction a ubiquinone + NADH + 5 H(+)(in) = a ubiquinol + NAD(+) + 4 H(+)(out). Its function is as follows. Core subunit of the mitochondrial membrane respiratory chain NADH dehydrogenase (Complex I) that is believed to belong to the minimal assembly required for catalysis. Complex I functions in the transfer of electrons from NADH to the respiratory chain. The immediate electron acceptor for the enzyme is believed to be ubiquinone. The sequence is that of NADH-ubiquinone oxidoreductase chain 5 (ND5) from Wickerhamomyces canadensis (Yeast).